A 183-amino-acid polypeptide reads, in one-letter code: NADH-quinone oxidoreductase subunit A (183 aa).

Helical transmembrane passes span 11 to 31, 63 to 83, and 98 to 118; these read IIAF…VPLL, FYLV…LYAW, and VVIF…VGAL. Residues 159–183 are disordered; sequence TGQIPAQSSGRVKSKTTPALSSEKE.

This sequence belongs to the complex I subunit 3 family. In terms of assembly, NDH-1 is composed of 14 different subunits. Subunits NuoA, H, J, K, L, M, N constitute the membrane sector of the complex.

It is found in the cell inner membrane. It carries out the reaction a quinone + NADH + 5 H(+)(in) = a quinol + NAD(+) + 4 H(+)(out). Functionally, NDH-1 shuttles electrons from NADH, via FMN and iron-sulfur (Fe-S) centers, to quinones in the respiratory chain. The immediate electron acceptor for the enzyme in this species is believed to be ubiquinone. Couples the redox reaction to proton translocation (for every two electrons transferred, four hydrogen ions are translocated across the cytoplasmic membrane), and thus conserves the redox energy in a proton gradient. In Acinetobacter baumannii (strain ACICU), this protein is NADH-quinone oxidoreductase subunit A.